The primary structure comprises 90 residues: Cluster 41 protein AFLA_114800 (90 aa).

A helical membrane pass occupies residues 55-77 (GLLLLCCFYPIGNLILLVRLSLV). Asparagine 80 carries N-linked (GlcNAc...) asparagine glycosylation.

It localises to the membrane. Its function is as follows. Cluster 41 protein; part of the gene cluster 41 that mediates the biosynthesis of an extracellular and diffusible metabolite that is able to stimulate colony sclerotial production. This chain is Cluster 41 protein AFLA_114800, found in Aspergillus flavus (strain ATCC 200026 / FGSC A1120 / IAM 13836 / NRRL 3357 / JCM 12722 / SRRC 167).